We begin with the raw amino-acid sequence, 302 residues long: RNA polymerase II holoenzyme cyclin-like subunit (302 aa).

In terms of domain architecture, Cyclin N-terminal spans 53–142; that stretch reads QQLIKLGKRM…LGECEFSLIS (90 aa).

Belongs to the cyclin family. Cyclin C subfamily. In terms of assembly, component of the srb8-11 complex, a regulatory module of the Mediator complex.

It is found in the nucleus. Functionally, component of the srb8-11 complex. The srb8-11 complex is a regulatory module of the Mediator complex which is itself involved in regulation of basal and activated RNA polymerase II-dependent transcription. The srb8-11 complex may be involved in the transcriptional repression of a subset of genes regulated by Mediator. It may inhibit the association of the Mediator complex with RNA polymerase II to form the holoenzyme complex. The srb8-11 complex phosphorylates the C-terminal domain (CTD) of the largest subunit of RNA polymerase II. The polypeptide is RNA polymerase II holoenzyme cyclin-like subunit (ssn8) (Aspergillus fumigatus (strain ATCC MYA-4609 / CBS 101355 / FGSC A1100 / Af293) (Neosartorya fumigata)).